The sequence spans 278 residues: Large ribosomal subunit protein uL2 (278 aa).

Disordered regions lie at residues 32–57 (ALTE…IGGG) and 221–278 (RGVA…KKKR). Basic residues predominate over residues 269–278 (IRSRHAKKKR).

Belongs to the universal ribosomal protein uL2 family. As to quaternary structure, part of the 50S ribosomal subunit. Forms a bridge to the 30S subunit in the 70S ribosome.

Functionally, one of the primary rRNA binding proteins. Required for association of the 30S and 50S subunits to form the 70S ribosome, for tRNA binding and peptide bond formation. It has been suggested to have peptidyltransferase activity; this is somewhat controversial. Makes several contacts with the 16S rRNA in the 70S ribosome. This Zymomonas mobilis subsp. mobilis (strain ATCC 31821 / ZM4 / CP4) protein is Large ribosomal subunit protein uL2.